The primary structure comprises 122 residues: Large ribosomal subunit protein uL14 (122 aa).

The protein belongs to the universal ribosomal protein uL14 family. As to quaternary structure, part of the 50S ribosomal subunit. Forms a cluster with proteins L3 and L19. In the 70S ribosome, L14 and L19 interact and together make contacts with the 16S rRNA in bridges B5 and B8.

Its function is as follows. Binds to 23S rRNA. Forms part of two intersubunit bridges in the 70S ribosome. In Lactobacillus gasseri (strain ATCC 33323 / DSM 20243 / BCRC 14619 / CIP 102991 / JCM 1131 / KCTC 3163 / NCIMB 11718 / NCTC 13722 / AM63), this protein is Large ribosomal subunit protein uL14.